The sequence spans 245 residues: MIIPALDLIDGTVVRLHQGDYGQQRDYGSDPLPRLQAYAAQGAKVLHLVDLTGAKDPAKRQIPLLKSLVAGVDVPVQVGGGVRTEADVAALLEAGVARVVVGSTAVKSPEEVKGWFKRFGPERLVLALDVRIDADGNKQVAVSGWQENSGVTLEELVESYLPVGLQHVLCTDISRDGTLAGSNVSLYEEVCARYPQVAFQSSGGIGDLKDIAALRGTGVRGVIVGRALLEGKFNVTEAIQCWQNG.

Catalysis depends on aspartate 7, which acts as the Proton acceptor. Catalysis depends on aspartate 129, which acts as the Proton donor.

This sequence belongs to the HisA/HisF family.

It is found in the cytoplasm. The catalysed reaction is 1-(5-phospho-beta-D-ribosyl)-5-[(5-phospho-beta-D-ribosylamino)methylideneamino]imidazole-4-carboxamide = 5-[(5-phospho-1-deoxy-D-ribulos-1-ylimino)methylamino]-1-(5-phospho-beta-D-ribosyl)imidazole-4-carboxamide. The protein operates within amino-acid biosynthesis; L-histidine biosynthesis; L-histidine from 5-phospho-alpha-D-ribose 1-diphosphate: step 4/9. This is 1-(5-phosphoribosyl)-5-[(5-phosphoribosylamino)methylideneamino] imidazole-4-carboxamide isomerase from Klebsiella pneumoniae subsp. pneumoniae (strain ATCC 700721 / MGH 78578).